A 64-amino-acid polypeptide reads, in one-letter code: LTCHTCPYNTCANSETCPAGKNICYQKKWEEHQGERIERRCVANCPKLGSNDKSLLCCRRDDCN.

5 disulfides stabilise this stretch: Cys-3-Cys-24, Cys-6-Cys-11, Cys-17-Cys-41, Cys-45-Cys-57, and Cys-58-Cys-63.

The protein belongs to the three-finger toxin family. Ancestral subfamily. Expressed by the venom gland.

The protein localises to the secreted. Produces peripheral paralysis by blocking neuromuscular transmission at the postsynaptic site. Very weak inhibitor of the endogenous nicotinic acetylcholine receptors (nAChR) in the human rhabdomyosarcoma TE 671 cell line. Not toxic to mice by intraperitoneal injection or to zebrafish by injection at the back of the dorsolateral region. The sequence is that of Long neurotoxin MS2 from Micrurus surinamensis (Surinam coral snake).